A 421-amino-acid chain; its full sequence is Lipid II:glycine glycyltransferase (421 aa).

Belongs to the FemABX family. Monomer.

It is found in the cytoplasm. The enzyme catalyses beta-D-GlcNAc-(1-&gt;4)-Mur2Ac(oyl-L-Ala-D-isoglutaminyl-L-Lys-D-Ala-D-Ala)-di-trans,octa-cis-undecaprenyl diphosphate + glycyl-tRNA(Gly) = beta-D-GlcNAc-(1-&gt;4)-Mur2Ac(oyl-L-Ala-D-isoglutaminyl-L-Lys-(N(6)-Gly)-D-Ala-D-Ala)-di-trans,octa-cis-undecaprenyl diphosphate + tRNA(Gly) + H(+). Its function is as follows. Catalyzes the incorporation of the first glycine of the pentaglycine interpeptide bridge, which is characteristic of the S.aureus peptidoglycan. This glycine is added to the epsilon-amino group of the L-lysine of the membrane-bound lipid II intermediate (GlcNAc-(beta-1,4)-N-acetylmuramic acid(-L-Ala-D-iGln-L-Lys-D-Ala-D-Ala)-pyrophosphoryl-undecaprenol), using glycyl-tRNA(Gly) as donor, in a ribosome-independent mechanism. In Staphylococcus aureus (strain bovine RF122 / ET3-1), this protein is Lipid II:glycine glycyltransferase (femX).